Here is a 452-residue protein sequence, read N- to C-terminus: tRNA modification GTPase MnmE (452 aa).

(6S)-5-formyl-5,6,7,8-tetrahydrofolate is bound by residues R22, E79, and K119. The 161-residue stretch at 215–375 folds into the TrmE-type G domain; the sequence is GMKVVIAGRP…LRQHLKQSMG (161 aa). Residue N225 participates in K(+) binding. GTP-binding positions include 225-230, 244-250, 269-272, and 333-336; these read NAGKSS, TDIAGTT, DTAG, and NKAD. A Mg(2+)-binding site is contributed by S229. Residues T244, I246, and T249 each contribute to the K(+) site. T250 contributes to the Mg(2+) binding site. (6S)-5-formyl-5,6,7,8-tetrahydrofolate is bound at residue K452.

This sequence belongs to the TRAFAC class TrmE-Era-EngA-EngB-Septin-like GTPase superfamily. TrmE GTPase family. Homodimer. Heterotetramer of two MnmE and two MnmG subunits. K(+) is required as a cofactor.

It is found in the cytoplasm. Exhibits a very high intrinsic GTPase hydrolysis rate. Involved in the addition of a carboxymethylaminomethyl (cmnm) group at the wobble position (U34) of certain tRNAs, forming tRNA-cmnm(5)s(2)U34. This chain is tRNA modification GTPase MnmE, found in Histophilus somni (strain 2336) (Haemophilus somnus).